A 242-amino-acid polypeptide reads, in one-letter code: ATP synthase subunit a (242 aa).

Helical transmembrane passes span S29 to Y49, F84 to T104, I114 to V134, F140 to I160, V189 to M209, and V210 to L230.

This sequence belongs to the ATPase A chain family. As to quaternary structure, F-type ATPases have 2 components, CF(1) - the catalytic core - and CF(0) - the membrane proton channel. CF(1) has five subunits: alpha(3), beta(3), gamma(1), delta(1), epsilon(1). CF(0) has three main subunits: a(1), b(2) and c(9-12). The alpha and beta chains form an alternating ring which encloses part of the gamma chain. CF(1) is attached to CF(0) by a central stalk formed by the gamma and epsilon chains, while a peripheral stalk is formed by the delta and b chains.

It is found in the cell inner membrane. Key component of the proton channel; it plays a direct role in the translocation of protons across the membrane. The protein is ATP synthase subunit a of Rickettsia felis (strain ATCC VR-1525 / URRWXCal2) (Rickettsia azadi).